Here is a 397-residue protein sequence, read N- to C-terminus: MVKETQYYDILGVKPSASPEEIKKAYRKLALKYHPDKNPDEGEKFKLISQAYEVLSDPKKRDVYDQGGEQAIKEGGSGSPSFSSPMDIFDMFFGGGGRMARERRGKNVVHQLSVTLEDLYNGVTKKLALQKNVICEKCEGVGGKKGSVEKCPLCKGRGMQIHIQQIGPGMVQQIQTVCIECKGQGERINPKDRCESCSGAKVIREKKIIEVHVEKGMKDGQKILFHGEGDQEPELEPGDVIIVLDQKDHSVFQRRGHDLIMKMKIQLSEALCGFKKTIKTLDNRILVITSKAGEVIKHGDLRCVRDEGMPIYKAPLEKGILIIQFLVIFPEKHWLSLEKLPQLEALLPPRQKVRITDDMDQVELKEFCPNEQNWRQHREAYEEDEDGPQAGVQCQTA.

One can recognise a J domain in the interval 4-70 (ETQYYDILGV…RDVYDQGGEQ (67 aa)). S18 bears the Phosphoserine mark. The CR-type zinc finger occupies 122–206 (GVTKKLALQK…CSGAKVIREK (85 aa)). Residues C135, C138, C151, C154, C178, C181, C194, and C197 each coordinate Zn(2+). CXXCXGXG motif repeat units follow at residues 135–142 (CEKCEGVG), 151–158 (CPLCKGRG), 178–185 (CIECKGQG), and 194–201 (CESCSGAK). Residue C394 is modified to Cysteine methyl ester. A lipid anchor (S-farnesyl cysteine) is attached at C394. The propeptide at 395–397 (QTA) is removed in mature form.

Its subcellular location is the membrane. In Homo sapiens (Human), this protein is DnaJ homolog subfamily A member 4 (DNAJA4).